The sequence spans 259 residues: MTLLEKTRKINAMLQNAAGKTVNFKEMADTLTDVIEANTYIVSRKGKLLGYSESLPIENDRMKQMLTERQFPEEYTQSLFNVGETSSNLEVSSQYTAFPIENSDLFTKGLTTIVPIVGGGERLGTLILSRLESNFTDDDLLLAEYGGTVVGMEILHEKAEEIEEEARSRAVVQMAISSLSYSELEAIEHIFDELNGKEGLLVASKIADRVGITRSVIVNALRKLESAGVIDSRSLGMKGTFIRVLNDKFLVELEKLKNN.

A GAF domain region spans residues 1–155 (MTLLEKTRKI…GGTVVGMEIL (155 aa)). The H-T-H motif DNA-binding region spans 203–222 (ASKIADRVGITRSVIVNALR).

Belongs to the CodY family.

The protein resides in the cytoplasm. Functionally, DNA-binding global transcriptional regulator which is involved in the adaptive response to starvation and acts by directly or indirectly controlling the expression of numerous genes in response to nutrient availability. During rapid exponential growth, CodY is highly active and represses genes whose products allow adaptation to nutrient depletion. The sequence is that of Global transcriptional regulator CodY from Listeria welshimeri serovar 6b (strain ATCC 35897 / DSM 20650 / CCUG 15529 / CIP 8149 / NCTC 11857 / SLCC 5334 / V8).